The chain runs to 520 residues: Cryptochrome DASH (520 aa).

A Photolyase/cryptochrome alpha/beta domain is found at 5–141 (RTVICLLRND…RVQTFWGSTL (137 aa)). The interval 479 to 504 (SRHVNNKSSGPSSSKGRKGSSYTARQ) is disordered.

This sequence belongs to the DNA photolyase class-1 family. Requires FAD as cofactor. (6R)-5,10-methylene-5,6,7,8-tetrahydrofolate serves as cofactor.

Its function is as follows. May have a photoreceptor function. Has weak cyclobutyl pyrimidine photolyase activity when expressed in E.coli and when tested in vitro. This chain is Cryptochrome DASH (cry-dash), found in Danio rerio (Zebrafish).